Consider the following 386-residue polypeptide: Methylthioribose-1-phosphate isomerase (386 aa).

The active-site Proton donor is Asp258.

The protein belongs to the eIF-2B alpha/beta/delta subunits family. MtnA subfamily.

The protein resides in the cytoplasm. The protein localises to the nucleus. The enzyme catalyses 5-(methylsulfanyl)-alpha-D-ribose 1-phosphate = 5-(methylsulfanyl)-D-ribulose 1-phosphate. Its pathway is amino-acid biosynthesis; L-methionine biosynthesis via salvage pathway; L-methionine from S-methyl-5-thio-alpha-D-ribose 1-phosphate: step 1/6. Catalyzes the interconversion of methylthioribose-1-phosphate (MTR-1-P) into methylthioribulose-1-phosphate (MTRu-1-P). This is Methylthioribose-1-phosphate isomerase from Uncinocarpus reesii (strain UAMH 1704).